A 168-amino-acid polypeptide reads, in one-letter code: ATP synthase subunit b (168 aa).

A helical transmembrane segment spans residues 13–33 (WTFLFQTLNLLVVMGLLYVFL).

Belongs to the ATPase B chain family. As to quaternary structure, F-type ATPases have 2 components, F(1) - the catalytic core - and F(0) - the membrane proton channel. F(1) has five subunits: alpha(3), beta(3), gamma(1), delta(1), epsilon(1). F(0) has three main subunits: a(1), b(2) and c(10-14). The alpha and beta chains form an alternating ring which encloses part of the gamma chain. F(1) is attached to F(0) by a central stalk formed by the gamma and epsilon chains, while a peripheral stalk is formed by the delta and b chains.

The protein localises to the cell membrane. Functionally, f(1)F(0) ATP synthase produces ATP from ADP in the presence of a proton or sodium gradient. F-type ATPases consist of two structural domains, F(1) containing the extramembraneous catalytic core and F(0) containing the membrane proton channel, linked together by a central stalk and a peripheral stalk. During catalysis, ATP synthesis in the catalytic domain of F(1) is coupled via a rotary mechanism of the central stalk subunits to proton translocation. Its function is as follows. Component of the F(0) channel, it forms part of the peripheral stalk, linking F(1) to F(0). This Moorella thermoacetica (strain ATCC 39073 / JCM 9320) protein is ATP synthase subunit b.